The chain runs to 454 residues: Phosphoglucosamine mutase (454 aa).

The active-site Phosphoserine intermediate is Ser104. The Mg(2+) site is built by Ser104, Asp244, Asp246, and Asp248. Residue Ser104 is modified to Phosphoserine.

It belongs to the phosphohexose mutase family. Mg(2+) is required as a cofactor. Post-translationally, activated by phosphorylation.

The catalysed reaction is alpha-D-glucosamine 1-phosphate = D-glucosamine 6-phosphate. Its function is as follows. Catalyzes the conversion of glucosamine-6-phosphate to glucosamine-1-phosphate. The protein is Phosphoglucosamine mutase of Lacticaseibacillus paracasei (strain ATCC 334 / BCRC 17002 / CCUG 31169 / CIP 107868 / KCTC 3260 / NRRL B-441) (Lactobacillus paracasei).